Here is a 467-residue protein sequence, read N- to C-terminus: Spermatogenesis- and oogenesis-specific basic helix-loop-helix-containing protein 2 (467 aa).

Positions 200-251 (QASFLHSTKEKLRRERIKSCCEQLRTLLPYVKGRKSDVASVIEATVDYVKQV) constitute a bHLH domain. Residues 443–453 (ASASDHQASQP) show a composition bias toward low complexity. Positions 443-467 (ASASDHQASQPPALPSPQPHDSSYF) are disordered.

As to quaternary structure, forms both hetero- and homodimers with SOHLH1. As to expression, preferentially expressed in the adult ovary and testis. Expressed in the majority of spermatogonia in adult animals, but not in the most undifferentiated spermatogonial population.

It localises to the nucleus. It is found in the cytoplasm. Transcription regulator of both male and female germline differentiation. Suppresses genes involved in spermatogonial stem cells maintenance, and induces genes important for spermatogonial differentiation. Coordinates oocyte differentiation without affecting meiosis I. The protein is Spermatogenesis- and oogenesis-specific basic helix-loop-helix-containing protein 2 (Sohlh2) of Mus musculus (Mouse).